Reading from the N-terminus, the 553-residue chain is Transcription factor MYB65 (553 aa).

The disordered stretch occupies residues 1 to 44 (MSYTTATADSDDGMHSSIHNESPAPDSISNGCRSRGKRSVLKKG). 2 HTH myb-type domains span residues 38–90 (RSVL…ANHL) and 91–145 (RPNL…KRRQ). 2 DNA-binding regions (H-T-H motif) span residues 66 to 90 (WNAV…ANHL) and 118 to 141 (WAQM…NTRI).

Mostly expressed in roots (e.g. root tips), stems, pollen, shoot apices, flowers and floral shoot tips, and, to a lower extent, in leaves and siliques.

Its subcellular location is the nucleus. In terms of biological role, transcriptional activator of alpha-amylase expression that binds to 5'-CAACTGTC-3' motif in target gene promoter. In vegetative tissues, inhibits growth by reducing cell proliferation. Promotes the expression of aleurone-related genes (e.g. CP1, CP, GASA1, BXL1 and BXL2) in seeds. Together with MYB33 and MYB101, promotes the programmed cell death (PCD) the vacuolation of protein storage vacuoles (PSVs) in the aleurone layers during seed germination. Together with MYB33, facilitates anther and tapetum development. The chain is Transcription factor MYB65 from Arabidopsis thaliana (Mouse-ear cress).